A 307-amino-acid polypeptide reads, in one-letter code: UDP-3-O-acyl-N-acetylglucosamine deacetylase (307 aa).

H80, H239, and D243 together coordinate Zn(2+). The active-site Proton donor is the H266.

It belongs to the LpxC family. The cofactor is Zn(2+).

It catalyses the reaction a UDP-3-O-[(3R)-3-hydroxyacyl]-N-acetyl-alpha-D-glucosamine + H2O = a UDP-3-O-[(3R)-3-hydroxyacyl]-alpha-D-glucosamine + acetate. Its pathway is glycolipid biosynthesis; lipid IV(A) biosynthesis; lipid IV(A) from (3R)-3-hydroxytetradecanoyl-[acyl-carrier-protein] and UDP-N-acetyl-alpha-D-glucosamine: step 2/6. Catalyzes the hydrolysis of UDP-3-O-myristoyl-N-acetylglucosamine to form UDP-3-O-myristoylglucosamine and acetate, the committed step in lipid A biosynthesis. This is UDP-3-O-acyl-N-acetylglucosamine deacetylase from Neisseria meningitidis serogroup C (strain 053442).